Consider the following 211-residue polypeptide: Histidine biosynthesis bifunctional protein HisIE (211 aa).

The segment at 1–122 is phosphoribosyl-AMP cyclohydrolase; that stretch reads MSVKAAEVSS…DPQEESQMVW (122 aa). The tract at residues 123-211 is phosphoribosyl-ATP pyrophosphohydrolase; the sequence is LHQLEQLLAA…VINKLKERHK (89 aa).

It in the N-terminal section; belongs to the PRA-CH family. This sequence in the C-terminal section; belongs to the PRA-PH family.

It is found in the cytoplasm. It catalyses the reaction 1-(5-phospho-beta-D-ribosyl)-ATP + H2O = 1-(5-phospho-beta-D-ribosyl)-5'-AMP + diphosphate + H(+). The catalysed reaction is 1-(5-phospho-beta-D-ribosyl)-5'-AMP + H2O = 1-(5-phospho-beta-D-ribosyl)-5-[(5-phospho-beta-D-ribosylamino)methylideneamino]imidazole-4-carboxamide. The protein operates within amino-acid biosynthesis; L-histidine biosynthesis; L-histidine from 5-phospho-alpha-D-ribose 1-diphosphate: step 2/9. Its pathway is amino-acid biosynthesis; L-histidine biosynthesis; L-histidine from 5-phospho-alpha-D-ribose 1-diphosphate: step 3/9. This Vibrio vulnificus (strain YJ016) protein is Histidine biosynthesis bifunctional protein HisIE.